Here is a 143-residue protein sequence, read N- to C-terminus: MNSIQLIIDIILILWLLILTVLYLRKKSLNLNIVKNKKIVRAKRYIVFYVIAESKVKGDDLERVVRNSLKDLLGNVWLNIANPKVVTYREDTQEGIISTNRIGYKAVLASLPFAKEINGNKILIVPRRTTGSLKKAKKLIGLK.

This sequence belongs to the eukaryotic/archaeal RNase P protein component 2 family. Consists of a catalytic RNA component and at least 4-5 protein subunits.

It is found in the cytoplasm. The catalysed reaction is Endonucleolytic cleavage of RNA, removing 5'-extranucleotides from tRNA precursor.. Functionally, part of ribonuclease P, a protein complex that generates mature tRNA molecules by cleaving their 5'-ends. The chain is Ribonuclease P protein component 2 from Saccharolobus islandicus (strain Y.N.15.51 / Yellowstone #2) (Sulfolobus islandicus).